We begin with the raw amino-acid sequence, 730 residues long: Hepatocyte growth factor (730 aa).

Positions 1 to 31 (MWVTRLLPVLLLQHVLLHLLLLPIAIPYAEG) are cleaved as a signal peptide. Gln-32 carries the pyrrolidone carboxylic acid modification. In terms of domain architecture, PAN spans 37-123 (NTLHEFKRSA…HEFDLYENKD (87 aa)). Intrachain disulfides connect Cys-70–Cys-96, Cys-74–Cys-84, Cys-128–Cys-206, Cys-149–Cys-189, Cys-177–Cys-201, Cys-211–Cys-288, Cys-232–Cys-271, and Cys-260–Cys-283. Kringle domains are found at residues 128–206 (CIIG…IPQC) and 211–288 (CMTC…IKMC). Residue Asn-294 is glycosylated (N-linked (GlcNAc...) asparagine). 11 disulfide bridges follow: Cys-305–Cys-383, Cys-326–Cys-365, Cys-354–Cys-377, Cys-391–Cys-469, Cys-412–Cys-452, Cys-440–Cys-464, Cys-487–Cys-606, Cys-519–Cys-535, Cys-614–Cys-681, Cys-644–Cys-660, and Cys-671–Cys-699. Kringle domains follow at residues 305–383 (CIQG…IPKC) and 391–469 (CYRG…ISRC). Positions 495-723 (VVNGIPTRTN…YAKWIHKIIL (229 aa)) constitute a Peptidase S1 domain. N-linked (GlcNAc...) asparagine glycosylation is found at Asn-568 and Asn-655.

Belongs to the peptidase S1 family. Plasminogen subfamily. Dimer of an alpha chain and a beta chain linked by a disulfide bond. Interacts with SRPX2; the interaction increases HGF mitogenic activity. In terms of processing, the single-chain precursor undergoes proteolytic processing by TMPRSS13 resulting in an active two-chain form. The single-chain precursor undergoes proteolytic processing by HGFAC resulting in an active two-chain form.

Functionally, potent mitogen for mature parenchymal hepatocyte cells, seems to be a hepatotrophic factor, and acts as a growth factor for a broad spectrum of tissues and cell types. Activating ligand for the receptor tyrosine kinase MET by binding to it and promoting its dimerization. Activates MAPK signaling following TMPRSS13 cleavage and activation. The protein is Hepatocyte growth factor (HGF) of Bos taurus (Bovine).